The primary structure comprises 190 residues: Threonylcarbamoyl-AMP synthase (190 aa).

The 184-residue stretch at Gly7–Gly190 folds into the YrdC-like domain.

It belongs to the SUA5 family. TsaC subfamily.

The protein localises to the cytoplasm. The catalysed reaction is L-threonine + hydrogencarbonate + ATP = L-threonylcarbamoyladenylate + diphosphate + H2O. Functionally, required for the formation of a threonylcarbamoyl group on adenosine at position 37 (t(6)A37) in tRNAs that read codons beginning with adenine. Catalyzes the conversion of L-threonine, HCO(3)(-)/CO(2) and ATP to give threonylcarbamoyl-AMP (TC-AMP) as the acyladenylate intermediate, with the release of diphosphate. The protein is Threonylcarbamoyl-AMP synthase of Escherichia coli O6:H1 (strain CFT073 / ATCC 700928 / UPEC).